The sequence spans 75 residues: Small ribosomal subunit protein bS18 (75 aa).

The protein belongs to the bacterial ribosomal protein bS18 family. Part of the 30S ribosomal subunit. Forms a tight heterodimer with protein bS6.

Binds as a heterodimer with protein bS6 to the central domain of the 16S rRNA, where it helps stabilize the platform of the 30S subunit. The chain is Small ribosomal subunit protein bS18 from Idiomarina loihiensis (strain ATCC BAA-735 / DSM 15497 / L2-TR).